The following is a 332-amino-acid chain: Glyceraldehyde-3-phosphate dehydrogenase 1 (332 aa).

NAD(+) contacts are provided by residues 11-12 (RI), D33, and R78. Residues 149–151 (SCT), T180, 209–210 (TG), and R232 each bind D-glyceraldehyde 3-phosphate. Catalysis depends on C150, which acts as the Nucleophile. N314 contacts NAD(+).

This sequence belongs to the glyceraldehyde-3-phosphate dehydrogenase family. As to quaternary structure, homotetramer.

The protein localises to the cytoplasm. It carries out the reaction D-glyceraldehyde 3-phosphate + phosphate + NAD(+) = (2R)-3-phospho-glyceroyl phosphate + NADH + H(+). Its pathway is carbohydrate degradation; glycolysis; pyruvate from D-glyceraldehyde 3-phosphate: step 1/5. The sequence is that of Glyceraldehyde-3-phosphate dehydrogenase 1 (GPD1) from Candida glabrata (strain ATCC 2001 / BCRC 20586 / JCM 3761 / NBRC 0622 / NRRL Y-65 / CBS 138) (Yeast).